A 131-amino-acid polypeptide reads, in one-letter code: MDSTHATKSCLLILLVALLCAGRAQGLQCYECYGVPIETSCPAVTCRASDGFCIAQNIELIEDSQRRKLKTRQCLSFCPAGVPIKDPNIRERTSCCSEDLCNAAVPTAGSTWTMAGVLLFSLSSVILQTLL.

Positions 1 to 26 are cleaved as a signal peptide; sequence MDSTHATKSCLLILLVALLCAGRAQG. The UPAR/Ly6 domain occupies 27–116; sequence LQCYECYGVP…TAGSTWTMAG (90 aa). Cystine bridges form between Cys29-Cys53, Cys32-Cys41, Cys46-Cys74, Cys78-Cys95, and Cys96-Cys101. Gly109 is lipidated: GPI-anchor amidated glycine. Residues 110 to 131 constitute a propeptide, removed in mature form; it reads STWTMAGVLLFSLSSVILQTLL.

It localises to the cell membrane. This chain is Lymphocyte antigen 6C2 (Ly6c2), found in Mus musculus (Mouse).